An 889-amino-acid polypeptide reads, in one-letter code: Cytoplasmic aconitate hydratase (889 aa).

Substrate is bound by residues glutamine 86 and 205–207 (DSH). Residues cysteine 437, cysteine 503, and cysteine 506 each coordinate [4Fe-4S] cluster. Substrate-binding positions include arginine 536, arginine 541, arginine 699, and 779 to 780 (SR).

Belongs to the aconitase/IPM isomerase family. Interacts (when associated with the 4Fe-4S) with FBXL5. Interacts with frataxin(81-210). Requires [4Fe-4S] cluster as cofactor.

The protein resides in the cytoplasm. It is found in the cytosol. The enzyme catalyses citrate = D-threo-isocitrate. Its function is as follows. Bifunctional iron sensor that switches between 2 activities depending on iron availability. Iron deprivation, promotes its mRNA binding activity through which it regulates the expression of genes involved in iron uptake, sequestration and utilization. Binds to iron-responsive elements (IRES) in the untranslated region of target mRNAs preventing for instance the translation of ferritin and aminolevulinic acid synthase and stabilizing the transferrin receptor mRNA. In terms of biological role, conversely, when cellular iron levels are high, binds a 4Fe-4S cluster which precludes RNA binding activity and promotes the aconitase activity, the isomerization of citrate to isocitrate via cis-aconitate. The chain is Cytoplasmic aconitate hydratase (Aco1) from Rattus norvegicus (Rat).